The primary structure comprises 264 residues: ATP synthase subunit a (264 aa).

A run of 6 helical transmembrane segments spans residues 29 to 49 (TWHI…LWIF), 90 to 110 (IAPL…MDMI), 134 to 154 (DVNI…FYSI), 177 to 197 (IPVN…SLAL), 208 to 228 (LIFI…TLGV), and 235 to 255 (LIFH…LTIV).

It belongs to the ATPase A chain family. As to quaternary structure, F-type ATPases have 2 components, CF(1) - the catalytic core - and CF(0) - the membrane proton channel. CF(1) has five subunits: alpha(3), beta(3), gamma(1), delta(1), epsilon(1). CF(0) has three main subunits: a(1), b(2) and c(9-12). The alpha and beta chains form an alternating ring which encloses part of the gamma chain. CF(1) is attached to CF(0) by a central stalk formed by the gamma and epsilon chains, while a peripheral stalk is formed by the delta and b chains.

The protein localises to the cell inner membrane. Functionally, key component of the proton channel; it plays a direct role in the translocation of protons across the membrane. The polypeptide is ATP synthase subunit a (Shewanella baltica (strain OS223)).